The sequence spans 245 residues: MAFKFVIFAAVVAVARAGLIASPAVSYAAAPALVAAPVAKVAYAAAPIAKVAYAAQPEEYDANPHYSFSYGISDALTGDSKSQQESRSGDVVQGSYSVVDPDGTKRTVDYTADPHNGFNAVVRREPLAAKTIVAAAPVATKVIAQPAVAYAAPVAKTISYAAPVATKTYVAQPALSYAAPLTKTYVSQPALSYAAPVAKTISYSAPLATKTYVSQPAISYAAPLAKTYVSQPALSYAAPAYAYHH.

The region spanning 25 to 86 (VSYAAAPALV…TGDSKSQQES (62 aa)) is the Chitin-binding type R&amp;R domain. Positions 79 to 100 (DSKSQQESRSGDVVQGSYSVVD) are disordered. A run of 3 repeats spans residues 92–95 (VQGS), 108–111 (VDYT), and 118–121 (FNAV).

Component of the cuticle of African malaria mosquito. This Anopheles gambiae (African malaria mosquito) protein is Cuticle protein (Ccp84Ab).